We begin with the raw amino-acid sequence, 312 residues long: Dihydroorotate dehydrogenase B (NAD(+)), catalytic subunit (312 aa).

FMN contacts are provided by residues serine 23 and 47–48 (KA). Substrate-binding positions include lysine 47 and 71 to 75 (NAIGL). Residues asparagine 103 and asparagine 131 each contribute to the FMN site. Residue asparagine 131 coordinates substrate. Catalysis depends on cysteine 134, which acts as the Nucleophile. Residues lysine 171 and isoleucine 197 each coordinate FMN. Substrate is bound at residue 198 to 199 (NT). FMN is bound by residues glycine 223, 249–250 (GG), and 271–272 (GT).

It belongs to the dihydroorotate dehydrogenase family. Type 1 subfamily. As to quaternary structure, heterotetramer of 2 PyrK and 2 PyrD type B subunits. Requires FMN as cofactor.

The protein localises to the cytoplasm. The catalysed reaction is (S)-dihydroorotate + NAD(+) = orotate + NADH + H(+). Its pathway is pyrimidine metabolism; UMP biosynthesis via de novo pathway; orotate from (S)-dihydroorotate (NAD(+) route): step 1/1. In terms of biological role, catalyzes the conversion of dihydroorotate to orotate with NAD(+) as electron acceptor. The chain is Dihydroorotate dehydrogenase B (NAD(+)), catalytic subunit (pyrDB) from Streptococcus pneumoniae (strain ATCC BAA-255 / R6).